A 247-amino-acid chain; its full sequence is Carboxy-S-adenosyl-L-methionine synthase (247 aa).

S-adenosyl-L-methionine is bound by residues Y40, 65–67 (GCS), 90–91 (DN), 122–123 (DI), N137, and R204.

This sequence belongs to the class I-like SAM-binding methyltransferase superfamily. Cx-SAM synthase family. Homodimer.

It catalyses the reaction prephenate + S-adenosyl-L-methionine = carboxy-S-adenosyl-L-methionine + 3-phenylpyruvate + H2O. Catalyzes the conversion of S-adenosyl-L-methionine (SAM) to carboxy-S-adenosyl-L-methionine (Cx-SAM). This Stutzerimonas stutzeri (strain A1501) (Pseudomonas stutzeri) protein is Carboxy-S-adenosyl-L-methionine synthase.